The primary structure comprises 813 residues: LPS-assembly protein LptD (813 aa).

Positions 1–29 are disordered; the sequence is MTEQRRSPNNRALPSPAPTSVPARARRAG. The signal sequence occupies residues 1–52; sequence MTEQRRSPNNRALPSPAPTSVPARARRAGGLHAGALRPLVLAMASLSAGAHA.

It belongs to the LptD family. In terms of assembly, component of the lipopolysaccharide transport and assembly complex. Interacts with LptE and LptA.

Its subcellular location is the cell outer membrane. In terms of biological role, together with LptE, is involved in the assembly of lipopolysaccharide (LPS) at the surface of the outer membrane. This is LPS-assembly protein LptD from Cupriavidus necator (strain ATCC 17699 / DSM 428 / KCTC 22496 / NCIMB 10442 / H16 / Stanier 337) (Ralstonia eutropha).